Consider the following 838-residue polypeptide: G-protein coupled receptor-associated sorting protein 2 (838 aa).

Disordered regions lie at residues 1–121 (MTGA…PGAR), 218–293 (ASNE…NPFS), and 531–552 (LELS…PSPE). A compositionally biased stretch (basic and acidic residues) spans 13–31 (KPEKKAGEEVVAGPEREND). The segment covering 220 to 235 (NESGFWSADETSTASS) has biased composition (polar residues). The span at 255-271 (RSRHRAKHQTNPRSRPR) shows a compositional bias: basic residues. Residues S282 and S284 each carry the phosphoserine modification. Residues 542–552 (SLLQPDQPSPE) are compositionally biased toward polar residues.

The protein belongs to the GPRASP family. In terms of assembly, interacts with cytoplasmic tails of a variety of G protein-coupled receptors such as muscarinic acetylcholine receptor M1/CHRM1 and calcitonin receptor/CALCR.

Its function is as follows. May play a role in regulation of a variety of G-protein coupled receptors. This is G-protein coupled receptor-associated sorting protein 2 (GPRASP2) from Pongo abelii (Sumatran orangutan).